Reading from the N-terminus, the 227-residue chain is Ornithine decarboxylase antizyme 1 (227 aa).

The protein belongs to the ODC antizyme family. In terms of assembly, interacts with ODC1 and thereby sterically blocks ODC homodimerization. Forms a ternary complex with PSMB4 and OAZ1 before PSMB4 is incorporated into the 20S proteasome. Interacts with AZIN2; this interaction disrupts the interaction between the antizyme and ODC1. Interacts with FAM171A1.

Ornithine decarboxylase (ODC) antizyme protein that negatively regulates ODC activity and intracellular polyamine biosynthesis and uptake in response to increased intracellular polyamine levels. Binds to ODC monomers, inhibiting the assembly of the functional ODC homodimer, and targets the monomers for ubiquitin-independent proteolytic destruction by the 26S proteasome. Triggers ODC degradation by inducing the exposure of a cryptic proteasome-interacting surface of ODC. Stabilizes AZIN2 by interfering with its ubiquitination. Also inhibits cellular uptake of polyamines by inactivating the polyamine uptake transporter. SMAD1/OAZ1/PSMB4 complex mediates the degradation of the CREBBP/EP300 repressor SNIP1. Involved in the translocation of AZIN2 from ER-Golgi intermediate compartment (ERGIC) to the cytosol. The chain is Ornithine decarboxylase antizyme 1 (Oaz1) from Rattus norvegicus (Rat).